The following is a 793-amino-acid chain: Protein translocase subunit SecA 2 (793 aa).

ATP-binding positions include Gln77, 95–99 (GEGKT), and Asp493.

Belongs to the SecA family. As to quaternary structure, monomer and homodimer (Potential). Part of the accessory SecA2/SecY2 protein translocation apparatus required to export cell wall protein GspB.

The protein localises to the cell membrane. It localises to the cytoplasm. The catalysed reaction is ATP + H2O + cellular proteinSide 1 = ADP + phosphate + cellular proteinSide 2.. In terms of biological role, part of the accessory SecA2/SecY2 system specifically required to export GspB, a serine-rich repeat cell wall protein encoded upstream in the same operon. The polypeptide is Protein translocase subunit SecA 2 (Streptococcus gordonii).